Here is a 353-residue protein sequence, read N- to C-terminus: Keratocan (353 aa).

Positions 1-21 (MMTLKVCPSLLLLFLVHSVWT) are cleaved as a signal peptide. In terms of domain architecture, LRRNT spans 34–72 (EHWSHYTFECPQECFCPPSFPNALYCDNKGLKEIPAIPA). 2 cysteine pairs are disulfide-bonded: Cys43/Cys49 and Cys47/Cys59. LRR repeat units follow at residues 73-94 (RIWY…PFVN), 97-118 (HLRW…SGVL), 123-143 (RLLY…PLPV), 144-165 (GLEQ…VFSN), 168-188 (NLTM…QSDT), 194-214 (SLMQ…SIPA), 215-236 (NTLQ…YFSA), 239-262 (KVTF…GFNV), 264-283 (SILD…PINA), and 284-305 (HLEH…QICP). Residue Asn94 is glycosylated (N-linked (GlcNAc...) (keratan sulfate) asparagine). Asn168 carries N-linked (GlcNAc...) asparagine glycosylation. Asn223 and Asn261 each carry an N-linked (GlcNAc...) (keratan sulfate) asparagine glycan. Asn299 is a glycosylation site (N-linked (GlcNAc...) asparagine). An intrachain disulfide couples Cys304 to Cys344.

The protein belongs to the small leucine-rich proteoglycan (SLRP) family. SLRP class II subfamily. Post-translationally, binds keratan sulfate chains.

The protein localises to the secreted. Its subcellular location is the extracellular space. It localises to the extracellular matrix. Functionally, plays an important role in generating and maintaining a transparent matrix within the corneal stroma. The protein is Keratocan (KERA) of Gallus gallus (Chicken).